The sequence spans 442 residues: Putative neutral sphingomyelinase (442 aa).

Glu-46 provides a ligand contact to Mg(2+). The active-site Proton acceptor is the His-264. The tract at residues 309–330 (ALTGEDDQSSQHQPEIQCNGSS) is disordered. A compositionally biased stretch (polar residues) spans 318-330 (SQHQPEIQCNGSS). A run of 2 helical transmembrane segments spans residues 362-384 (RILYYSAATFLFVLLVLLVEFTA) and 391-413 (IFLLLKFIVFGVILFCVFMASIW).

Belongs to the neutral sphingomyelinase family.

The protein localises to the membrane. It carries out the reaction a sphingomyelin + H2O = phosphocholine + an N-acylsphing-4-enine + H(+). Its pathway is lipid metabolism; sphingolipid metabolism. The chain is Putative neutral sphingomyelinase from Drosophila melanogaster (Fruit fly).